Here is a 262-residue protein sequence, read N- to C-terminus: Global transcriptional regulator CodY (262 aa).

The segment at 1 to 159 (MAHLLEKTRK…SSTVVGIQLL (159 aa)) is GAF domain. The H-T-H motif DNA-binding region spans 207–226 (ASVIADRIGITRSVIVNALR).

This sequence belongs to the CodY family.

It localises to the cytoplasm. DNA-binding global transcriptional regulator which is involved in the adaptive response to starvation and acts by directly or indirectly controlling the expression of numerous genes in response to nutrient availability. During rapid exponential growth, CodY is highly active and represses genes whose products allow adaptation to nutrient depletion. The sequence is that of Global transcriptional regulator CodY from Streptococcus gordonii (strain Challis / ATCC 35105 / BCRC 15272 / CH1 / DL1 / V288).